Here is a 300-residue protein sequence, read N- to C-terminus: MRKMEAKKEEIKKGPWKAEEDEVLINHVKRYGPRDWSSIRSKGLLQRTGKSCRLRWVNKLRPNLKNGCKFSADEERTVIELQSEFGNKWARIATYLPGRTDNDVKNFWSSRQKRLARILHNSSDASSSSFNPKSSSSHRLKGKNVKPIRQSSQGFGLVEEEVTVSSSCSQMVPYSSDQVGDEVLRLPDLGVKLEHQPFAFGTDLVLAEYSDSQNDANQQAISPFSPESRELLARLDDPFYYDILGPADSSEPLFALPQPFFEPSPVPRRCRHVSKDEEADVFLDDFPADMFDQVDPIPSP.

2 consecutive HTH myb-type domains span residues 8-64 (KEEI…RPNL) and 65-116 (KNGC…KRLA). DNA-binding regions (H-T-H motif) lie at residues 36–60 (WSSI…VNKL) and 89–112 (WARI…SSRQ). Positions 123–135 (SDASSSSFNPKSS) are enriched in low complexity. Residues 123-145 (SDASSSSFNPKSSSSHRLKGKNV) form a disordered region. Positions 136–145 (SSHRLKGKNV) are enriched in basic residues.

In terms of tissue distribution, confined to inflorescences, especially in stamens and pollen.

It is found in the nucleus. Functionally, transcription activator that acts as a positive regulator of male germline development by promoting both gametic cell specification and cell cycle progression. Binds to canonical MYB sites 5'-AACCGTC-3', 5'-AAACCGC-3' and 5'-AACCGT-3' in promoters to trigger the expression of male germline-specific or enriched genes (e.g. MGH3, GEX2 and GCS1), including those required for fertilization. Required for sperm cell specification leading to pollen maturation by activating a germline-specific regulon. Involved in pollen mitosis entry at G2-M transition via the regulation of CYCB1-1, DAZ1 and DAZ2 expression. The chain is Transcription factor DUO1 from Arabidopsis thaliana (Mouse-ear cress).